Here is a 109-residue protein sequence, read N- to C-terminus: RYamide neuropeptides (109 aa).

Positions 1–22 are cleaved as a signal peptide; sequence MNECVNKLLHLKFLFYFILGIQ. Residue Y33 is modified to Tyrosine amide. Positions 36 to 53 are excised as a propeptide; that stretch reads STTYDESLKSRRIFIVPR. A Tyrosine amide modification is found at Y63. Residues 67–109 constitute a propeptide that is removed on maturation; that stretch reads SGKYLCLSREINKLIVRKRLRNNDKERTPTLSFITKHFLMRNT.

The protein resides in the secreted. Functionally, neuropeptides RYamide-1 and RYamide-2 are ligands for the G-protein coupled receptor RYa-R. May suppress feeding behavior. The sequence is that of RYamide neuropeptides from Drosophila melanogaster (Fruit fly).